Reading from the N-terminus, the 170-residue chain is Negative modulator of initiation of replication (170 aa).

The interval N139–K145 is interaction with DNA.

The protein belongs to the SeqA family. As to quaternary structure, homodimer. Polymerizes to form helical filaments.

The protein localises to the cytoplasm. Negative regulator of replication initiation, which contributes to regulation of DNA replication and ensures that replication initiation occurs exactly once per chromosome per cell cycle. Binds to pairs of hemimethylated GATC sequences in the oriC region, thus preventing assembly of replication proteins and re-initiation at newly replicated origins. Repression is relieved when the region becomes fully methylated. In Tolumonas auensis (strain DSM 9187 / NBRC 110442 / TA 4), this protein is Negative modulator of initiation of replication.